Consider the following 102-residue polypeptide: NADH-quinone oxidoreductase subunit K (102 aa).

3 consecutive transmembrane segments (helical) span residues 5–25, 31–51, and 66–86; these read IAHYLTVSAVLFTLGIFGIFL, IIILMSIELILLAVNLNFIAF, and FVLTVAAAEAAIGLAILVVFF.

This sequence belongs to the complex I subunit 4L family. NDH-1 is composed of 14 different subunits. Subunits NuoA, H, J, K, L, M, N constitute the membrane sector of the complex.

The protein localises to the cell inner membrane. The catalysed reaction is a quinone + NADH + 5 H(+)(in) = a quinol + NAD(+) + 4 H(+)(out). Its function is as follows. NDH-1 shuttles electrons from NADH, via FMN and iron-sulfur (Fe-S) centers, to quinones in the respiratory chain. The immediate electron acceptor for the enzyme in this species is believed to be ubiquinone. Couples the redox reaction to proton translocation (for every two electrons transferred, four hydrogen ions are translocated across the cytoplasmic membrane), and thus conserves the redox energy in a proton gradient. This chain is NADH-quinone oxidoreductase subunit K, found in Chelativorans sp. (strain BNC1).